Here is a 121-residue protein sequence, read N- to C-terminus: Ribonuclease CL2 (121 aa).

K6 and R9 together coordinate substrate. The active-site Proton acceptor is H11. Intrachain disulfides connect C26-C81, C42-C92, and C60-C107. Substrate-binding positions include 43–47 and R82; that span reads KPSNT. The Proton donor role is filled by H114.

The protein belongs to the pancreatic ribonuclease family.

It is found in the secreted. Pyrimidine-specific nuclease with preference for C. The chain is Ribonuclease CL2 from Gallus gallus (Chicken).